The sequence spans 594 residues: MQVSKDALKQLIRAGRGVIPASKVLEGGYLVNVMSNEVYLADVAIYEERIVAIGKVEEYKGPETEVIDVTGLYLLPGLIDGHLHSECSKLSITSFAKAVVPCGTTSIVSGLDEYISVSGLEGLQEVFKEVKKSPLKVFWGAPYKTPYTFPKSTVAFNFTEEVHQEVQQWPECFGVWETVREAVQEEDEDTLGALATAQNNRLPIFGCAPMARGKELNGYLCAGVRLDHESYDHEEVVEKMRNGMHMLIRESSVTHFLEENIRAVTEVNPYLARRVSFCTDDVTATDILEKGHMDNVVRQAIKAGVEPITAIQMATINSAEAYRIDHLVGSITPGKIADIVMVDSLEGFQVQAVLTDGKLVARDKKMSYELKAPARSSVLSCALKCATTTPEDFQYRVEIEQGTAEVLSMNVKGPFVRKRRDVTLQVANHIVQADTENDVLMVSVLERFGRNGNKSLAFCSGWKLKKGAMASSAAPDDNNIIVMGADASDMSIAVNHLIENGGGQVIVADGEILEFLALPVGGIVSDLEAEEIARQESLLTKAANSLGCDLPDPLMYMFFLPITAIPDYAITDVGPVDCIALTTFDPILALNPGK.

This sequence belongs to the metallo-dependent hydrolases superfamily. Adenine deaminase family. Mn(2+) serves as cofactor.

It carries out the reaction adenine + H2O + H(+) = hypoxanthine + NH4(+). The protein is Adenine deaminase 1 of Desulfotalea psychrophila (strain LSv54 / DSM 12343).